The following is a 175-amino-acid chain: MNRIVGILISILMLACIGVTMAAETPVEATIEPKNTFSEPLATQMVLLKGIFDPKVEPMDPANDAIEITGVLKLNHNEVRGVVNINNKKGEFAGKCTPFKSSNFEGVVLKCGSEGSIKVLQINIGDGKLELFGKYGDGIVFLEGKIPEMSYKSLASSASAPTSVRPEAWMVDILL.

The signal sequence occupies residues 1–22 (MNRIVGILISILMLACIGVTMA).

This is an uncharacterized protein from Archaeoglobus fulgidus (strain ATCC 49558 / DSM 4304 / JCM 9628 / NBRC 100126 / VC-16).